We begin with the raw amino-acid sequence, 368 residues long: GDP-fucose transporter 1 (368 aa).

The next 9 membrane-spanning stretches (helical) occupy residues Leu64–Leu84, Leu98–Ile118, Val141–Tyr161, Phe166–Leu186, Thr195–Phe215, Trp217–Val237, Leu251–Gly271, Phe287–Met307, and Ala332–Ile352.

The protein belongs to the TPT transporter family. SLC35C subfamily.

The protein resides in the golgi apparatus membrane. It catalyses the reaction GMP(out) + GDP-beta-L-fucose(in) = GMP(in) + GDP-beta-L-fucose(out). Antiporter specific for GDP-l-fucose and depending on the concomitant reverse transport of GMP. Involved in GDP-fucose import from the cytoplasm into the Golgi lumen. The protein is GDP-fucose transporter 1 (slc35c1) of Dictyostelium discoideum (Social amoeba).